The following is an 83-amino-acid chain: ATP synthase subunit 9, mitochondrial (83 aa).

2 helical membrane-spanning segments follow: residues 8 to 28 and 45 to 72; these read IGAGAATIASAGAAIGIGNVL and SFGYAILGFALTEAIASFAPMMAFLISS.

This sequence belongs to the ATPase C chain family. F-type ATPases have 2 components, CF(1) - the catalytic core - and CF(0) - the membrane proton channel. CF(1) has five subunits: alpha(3), beta(3), gamma(1), delta(1), epsilon(1). CF(0) has three main subunits: a, b and c.

The protein resides in the mitochondrion membrane. Functionally, this protein is one of the chains of the nonenzymatic membrane component (F0) of mitochondrial ATPase. This chain is ATP synthase subunit 9, mitochondrial (ATP9), found in Helianthus annuus (Common sunflower).